The chain runs to 58 residues: Metallothionein (58 aa).

Residues 1–29 (MPGPCCNDVCECAAGGCKTGCVCTSCRCS) form a beta region. Positions 5, 6, 10, 12, 17, 21, 23, 26, 28, 31, 34, 38, 40, 46, 50, 54, 56, and 57 each coordinate a divalent metal cation. Residues 30-58 (PCDKCTSGCKCPSKEECAKTCSKPCECCP) are alpha.

Functionally, metallothioneins have a high content of cysteine residues that bind various heavy metals. Class I MTS in crustacea are involved in the sequestration of elevated levels of heavy-metal ions. This Astacus astacus (Noble crayfish) protein is Metallothionein.